The primary structure comprises 322 residues: GDSL esterase/lipase At5g03600 (322 aa).

S21 serves as the catalytic Nucleophile. Active-site residues include D295 and H298.

The protein belongs to the 'GDSL' lipolytic enzyme family.

The chain is GDSL esterase/lipase At5g03600 from Arabidopsis thaliana (Mouse-ear cress).